A 429-amino-acid polypeptide reads, in one-letter code: Xaa-Pro dipeptidase (429 aa).

Residues aspartate 241, aspartate 252, histidine 334, glutamate 372, and glutamate 411 each coordinate Mn(2+).

This sequence belongs to the peptidase M24B family. Bacterial-type prolidase subfamily. It depends on Mn(2+) as a cofactor.

The enzyme catalyses Xaa-L-Pro dipeptide + H2O = an L-alpha-amino acid + L-proline. In terms of biological role, splits dipeptides with a prolyl residue in the C-terminal position. The polypeptide is Xaa-Pro dipeptidase (Marinobacter nauticus (strain ATCC 700491 / DSM 11845 / VT8) (Marinobacter aquaeolei)).